The chain runs to 1074 residues: Isoleucine--tRNA ligase (1074 aa).

The short motif at 50 to 60 is the 'HIGH' region element; that stretch reads PYTSGAAHMGT. The short motif at 605-609 is the 'KMSKS' region element; sequence GMSKS. ATP is bound at residue Lys-608.

The protein belongs to the class-I aminoacyl-tRNA synthetase family. IleS type 2 subfamily. As to quaternary structure, monomer. Zn(2+) serves as cofactor.

It is found in the cytoplasm. The catalysed reaction is tRNA(Ile) + L-isoleucine + ATP = L-isoleucyl-tRNA(Ile) + AMP + diphosphate. Its function is as follows. Catalyzes the attachment of isoleucine to tRNA(Ile). As IleRS can inadvertently accommodate and process structurally similar amino acids such as valine, to avoid such errors it has two additional distinct tRNA(Ile)-dependent editing activities. One activity is designated as 'pretransfer' editing and involves the hydrolysis of activated Val-AMP. The other activity is designated 'posttransfer' editing and involves deacylation of mischarged Val-tRNA(Ile). The protein is Isoleucine--tRNA ligase of Haloarcula marismortui (strain ATCC 43049 / DSM 3752 / JCM 8966 / VKM B-1809) (Halobacterium marismortui).